A 152-amino-acid polypeptide reads, in one-letter code: Transcriptional regulator MraZ (152 aa).

SpoVT-AbrB domains follow at residues 5 to 52 (INAI…TAAQ) and 81 to 124 (ATDV…NKEL).

It belongs to the MraZ family. Forms oligomers.

The protein resides in the cytoplasm. The protein localises to the nucleoid. In Legionella pneumophila (strain Paris), this protein is Transcriptional regulator MraZ.